The sequence spans 778 residues: Melanoma-associated antigen D1 (778 aa).

Disordered stretches follow at residues 41–60, 78–123, and 182–333; these read PTNQATAAASPQSSQPPTAN, FKVQ…KGPN, and KAWN…PAWQ. The residue at position 92 (Tyr-92) is a Phosphotyrosine. Polar residues-rich tracts occupy residues 104–118, 185–211, 225–240, 253–263, and 300–319; these read PNTQPKAAFKSQNAT, NDTTKAPTADTQTQNVNQAKMATSQAD, TAQTSADGSQAQNLES, NNLNVEENSSG, and LAWQNPSGWQNQTARQTPPA. 19 consecutive repeat copies span residues 296 to 301, 302 to 307, 308 to 313, 332 to 337, 338 to 343, 344 to 349, 350 to 355, 356 to 361, 362 to 367, 368 to 373, 374 to 379, 380 to 385, 386 to 391, 392 to 397, 398 to 403, 404 to 409, 410 to 415, 416 to 421, and 422 to 427. The tract at residues 296–444 is 22 X 6 AA tandem repeats of W-[PQ]-X-P-X-X; sequence WQTPLAWQNP…IPPDWQNLRP (149 aa). The segment at 376 to 412 is disordered; the sequence is NPPGWQTPPGWQTPPGWQGPPDWQGPPDWPLPPDWPL. Residues 377-397 show a composition bias toward low complexity; sequence PPGWQTPPGWQTPPGWQGPPD. A compositionally biased stretch (pro residues) spans 398–412; that stretch reads WQGPPDWPLPPDWPL. One copy of the 20; approximate repeat lies at 428–432; that stretch reads WIPAD. Tandem repeats lie at residues 433–438 and 439–444. The span at 440 to 455 shows a compositional bias: low complexity; it reads QNLRPSPNLRPSPNSR. The disordered stretch occupies residues 440–466; that stretch reads QNLRPSPNLRPSPNSRASQNPGAAQPR. The 199-residue stretch at 471-669 folds into the MAGE domain; it reads LQERANKLVK…RDWTAQFMEA (199 aa).

Interacts with DLX5, DLX7 and MSX2 and forms homomultimers. Interacts with UNC5A. Interacts with TRIM28 and PJA1. Interacts with NGFR/p75NTR and RORA. In terms of tissue distribution, expressed in bone marrow stromal cells from both multiple myeloma patients and healthy donors. Seems to be ubiquitously expressed.

It is found in the cytoplasm. The protein localises to the cell membrane. The protein resides in the nucleus. Involved in the apoptotic response after nerve growth factor (NGF) binding in neuronal cells. Inhibits cell cycle progression, and facilitates NGFR-mediated apoptosis. May act as a regulator of the function of DLX family members. May enhance ubiquitin ligase activity of RING-type zinc finger-containing E3 ubiquitin-protein ligases. Proposed to act through recruitment and/or stabilization of the Ubl-conjugating enzyme (E2) at the E3:substrate complex. Plays a role in the circadian rhythm regulation. May act as RORA co-regulator, modulating the expression of core clock genes such as BMAL1 and NFIL3, induced, or NR1D1, repressed. This Homo sapiens (Human) protein is Melanoma-associated antigen D1 (MAGED1).